The following is a 775-amino-acid chain: MGSFLRSFRHNGGSTAPSVGAVPAKKEPQPPPMTPLEKRLLDMGPIREDGSDKFYGMENYGNTCYCNSILQCLYYSVPFREAVINYPTRTPIESLEAALAKSLRYPNPNAQLEAEAQAEKQKAANAQRPGMPPNPQQKPEDKDSPEYKKKMALQTLPLLETQNNASSYGMSESLFTSLKDIFESVVGSQSRIGIIRPQQFLEVLRRDHEMFRTAMHQDAHEFLNLLLNEVVANVEAEASKQPPIEKSLPAPETADSVDQSSSTGSKTPNTTRWVHELFEGLLTSETQCLTCEKVSQRDEVFLDLSVDLEQHSSVTSCLRKFSAEEMLCERNKFHCDNCGGLQEAEKRMKIKRLPRILALHLKRFKYTEDLQRLQKLFHRVVYPYHLRLFNTTDDAEDPDRLYELYAVVVHIGGGPYHGHYVAIIKTEDRGWLLFDDEMVEPVDKNYVKNFFGDKPGLACAYVLFYQETTLEAVLKEQEQENMDSNLAATDANDTILKQNGFPQSPLAHVHSASQIPSHEDNLRPNGLRRAPTAPQLSTHHEHGDPESAPFSPLSPLSPLSPLSPLSQTPPVPPVPERVTTVATPPKNDALAKKERAREEKERKAAEKEREKAEKLRRKEQEARMKENQRREEAELKAALEMSKASKAEEDRRLSHENGKEKQGGSLSRLKRGSKSLSHRLGKDKETRSVSSDLPPVPIPEHSTLSQTGPTSEQQQQQQQQQSPPNHDQPPNSPQLGKPTIREDEQVNHKDSKHERTGHGKWRSFSLRKKSFSILS.

Residues 1–45 (MGSFLRSFRHNGGSTAPSVGAVPAKKEPQPPPMTPLEKRLLDMGP) form a disordered region. Positions 36–45 (LEKRLLDMGP) are enriched in basic and acidic residues. The 414-residue stretch at 55–468 (YGMENYGNTC…CAYVLFYQET (414 aa)) folds into the USP domain. Catalysis depends on cysteine 64, which acts as the Nucleophile. Disordered regions lie at residues 113–146 (EAEA…DSPE) and 238–269 (ASKQ…KTPN). The segment covering 256–269 (SVDQSSSTGSKTPN) has biased composition (polar residues). The Proton acceptor role is filled by histidine 419. Residues 496–775 (LKQNGFPQSP…LRKKSFSILS (280 aa)) are disordered. 2 stretches are compositionally biased toward low complexity: residues 546-566 (ESAP…SPLS) and 576-585 (ERVTTVATPP). Residues 586-653 (KNDALAKKER…ASKAEEDRRL (68 aa)) adopt a coiled-coil conformation. Residues 589–662 (ALAKKERARE…LSHENGKEKQ (74 aa)) are compositionally biased toward basic and acidic residues. Basic residues predominate over residues 668–679 (RLKRGSKSLSHR). Low complexity predominate over residues 705 to 725 (SQTGPTSEQQQQQQQQQSPPN). Residues 739 to 757 (TIREDEQVNHKDSKHERTG) are compositionally biased toward basic and acidic residues. Residues 758–775 (HGKWRSFSLRKKSFSILS) show a composition bias toward basic residues.

It belongs to the peptidase C19 family. In terms of assembly, interacts with creA, creC and qutD.

It carries out the reaction Thiol-dependent hydrolysis of ester, thioester, amide, peptide and isopeptide bonds formed by the C-terminal Gly of ubiquitin (a 76-residue protein attached to proteins as an intracellular targeting signal).. Its function is as follows. Ubiquitin thioesterase component of the regulatory network controlling carbon source utilization through ubiquitination and deubiquitination involving creA, creB, creC, creD and acrB. Deubiquitinates the creA catabolic repressor and the quinate permease qutD. Also plays a role in response to carbon starvation and the control of extracellular proteases activity. This Aspergillus fumigatus (strain ATCC MYA-4609 / CBS 101355 / FGSC A1100 / Af293) (Neosartorya fumigata) protein is Probable ubiquitin carboxyl-terminal hydrolase creB (creB).